The sequence spans 357 residues: MNPYWSALVRDLKPYVPGEQPKLDNLVKLNTNENPYPPSPKVLAAIRGELGASLRLYPDPNAELLKQAIARYHGVGANQVFVGNGSDEVLAHAFQALLKQTRPILFPDITYSFYPVYCGLYDIAHETVPLTESFEIRIEDYLRPNGGVVFPNPNAPTGRLLPLADIETLLSKNRDSVVIVDEAYIDFGGESAAALVNRFPHLLVIQTLSKSRSLAGLRVGFALGEPGLIEALERVKGSFNSYPLDRLAIVGGVAAFDDRDHFEWSRQAIMWTRQWLSRGLAELGFEVLPSAANFVFVRHPRHDGAELAAALRDRHIIVRHFKLPRIDQFLRITVGTEGECQILLDALSELVAGQAAA.

K210 bears the N6-(pyridoxal phosphate)lysine mark.

Belongs to the class-II pyridoxal-phosphate-dependent aminotransferase family. Histidinol-phosphate aminotransferase subfamily. Homodimer. Pyridoxal 5'-phosphate serves as cofactor.

It carries out the reaction L-histidinol phosphate + 2-oxoglutarate = 3-(imidazol-4-yl)-2-oxopropyl phosphate + L-glutamate. Its pathway is amino-acid biosynthesis; L-histidine biosynthesis; L-histidine from 5-phospho-alpha-D-ribose 1-diphosphate: step 7/9. This chain is Histidinol-phosphate aminotransferase 1, found in Methylococcus capsulatus (strain ATCC 33009 / NCIMB 11132 / Bath).